The primary structure comprises 148 residues: Deoxyuridine 5'-triphosphate nucleotidohydrolase (148 aa).

Substrate is bound by residues 68–70 (RSG), Asn81, 85–87 (TID), and Lys95.

The protein belongs to the dUTPase family. Mg(2+) is required as a cofactor.

It carries out the reaction dUTP + H2O = dUMP + diphosphate + H(+). The protein operates within pyrimidine metabolism; dUMP biosynthesis; dUMP from dCTP (dUTP route): step 2/2. In terms of biological role, this enzyme is involved in nucleotide metabolism: it produces dUMP, the immediate precursor of thymidine nucleotides and it decreases the intracellular concentration of dUTP so that uracil cannot be incorporated into DNA. This is Deoxyuridine 5'-triphosphate nucleotidohydrolase from Rickettsia canadensis (strain McKiel).